The sequence spans 287 residues: Formamidopyrimidine-DNA glycosylase (287 aa).

Catalysis depends on proline 2, which acts as the Schiff-base intermediate with DNA. Glutamate 3 acts as the Proton donor in catalysis. The Proton donor; for beta-elimination activity role is filled by lysine 58. 3 residues coordinate DNA: histidine 104, arginine 123, and arginine 166. The FPG-type zinc-finger motif lies at 251–287; the sequence is RTYDREGQPCRNDGCRGVIGREVQAGRSTFYCPVCQR. Arginine 277 (proton donor; for delta-elimination activity) is an active-site residue.

Belongs to the FPG family. Monomer. It depends on Zn(2+) as a cofactor.

The catalysed reaction is Hydrolysis of DNA containing ring-opened 7-methylguanine residues, releasing 2,6-diamino-4-hydroxy-5-(N-methyl)formamidopyrimidine.. The enzyme catalyses 2'-deoxyribonucleotide-(2'-deoxyribose 5'-phosphate)-2'-deoxyribonucleotide-DNA = a 3'-end 2'-deoxyribonucleotide-(2,3-dehydro-2,3-deoxyribose 5'-phosphate)-DNA + a 5'-end 5'-phospho-2'-deoxyribonucleoside-DNA + H(+). Its function is as follows. Involved in base excision repair of DNA damaged by oxidation or by mutagenic agents. Acts as a DNA glycosylase that recognizes and removes damaged bases. Has a preference for oxidized purines, such as 7,8-dihydro-8-oxoguanine (8-oxoG). Has AP (apurinic/apyrimidinic) lyase activity and introduces nicks in the DNA strand. Cleaves the DNA backbone by beta-delta elimination to generate a single-strand break at the site of the removed base with both 3'- and 5'-phosphates. This is Formamidopyrimidine-DNA glycosylase from Phenylobacterium zucineum (strain HLK1).